A 248-amino-acid polypeptide reads, in one-letter code: DNA-directed RNA polymerase subunit Rpo3 (248 aa).

Belongs to the archaeal Rpo3/eukaryotic RPB3 RNA polymerase subunit family. Part of the RNA polymerase complex.

The protein localises to the cytoplasm. The catalysed reaction is RNA(n) + a ribonucleoside 5'-triphosphate = RNA(n+1) + diphosphate. Its function is as follows. DNA-dependent RNA polymerase (RNAP) catalyzes the transcription of DNA into RNA using the four ribonucleoside triphosphates as substrates. The protein is DNA-directed RNA polymerase subunit Rpo3 of Halobacterium salinarum (strain ATCC 29341 / DSM 671 / R1).